The sequence spans 760 residues: Protein P1 (760 aa).

The N-terminal stretch at 1-33 is a signal peptide; sequence MASFLKPVNSQGLWLSLLLAITYLFLLPSAGQS. 4 helical membrane passes run 172–192, 194–214, 218–235, and 240–260; these read LIEF…VYVA, AVPG…WAWP, ASSL…IGFL, and IGLI…WSLL. Residues 318–515 form the Peptidase S39 domain; sequence IPGVQIKKLR…SSSPKFTGCE (198 aa). Residues His366, Asp396, and Ser465 each act as for protease activity in the active site. 2 disordered regions span residues 572–672 and 684–760; these read GLWA…LSQV and LTVQ…PRRN. The span at 621 to 643 shows a compositional bias: basic and acidic residues; that stretch reads RAEKVRHVRRSEMTPEQKRADNL.

It belongs to the peptidase S39B family. Post-translationally, specific enzymatic cleavages in vivo yield mature proteins. The protease probably cleaves itself and releases the VPg protein.

The protein resides in the membrane. Its function is as follows. Precursor from which the VPg molecule is probably released at the onset of the RNA synthesis. Essential for virus replication. This is Protein P1 from Pea enation mosaic virus-1 (strain WSG) (PEMV-1).